The chain runs to 394 residues: S-adenosylmethionine synthase 3 (394 aa).

Glutamate 11 is a binding site for Mg(2+). An ATP-binding site is contributed by histidine 17. K(+) is bound at residue glutamate 45. Residues glutamate 58 and glutamine 101 each contribute to the L-methionine site. ATP-binding positions include 169-171 (DGK), 237-240 (SGRF), aspartate 248, 254-255 (RK), alanine 271, lysine 275, and lysine 279. Aspartate 248 is an L-methionine binding site. Lysine 279 provides a ligand contact to L-methionine.

Belongs to the AdoMet synthase family. Homotetramer. Mn(2+) is required as a cofactor. The cofactor is Mg(2+). It depends on Co(2+) as a cofactor. K(+) serves as cofactor.

Its subcellular location is the cytoplasm. It catalyses the reaction L-methionine + ATP + H2O = S-adenosyl-L-methionine + phosphate + diphosphate. It functions in the pathway amino-acid biosynthesis; S-adenosyl-L-methionine biosynthesis; S-adenosyl-L-methionine from L-methionine: step 1/1. Catalyzes the formation of S-adenosylmethionine from methionine and ATP. The reaction comprises two steps that are both catalyzed by the same enzyme: formation of S-adenosylmethionine (AdoMet) and triphosphate, and subsequent hydrolysis of the triphosphate. The protein is S-adenosylmethionine synthase 3 (SAM3) of Hordeum vulgare (Barley).